The sequence spans 104 residues: Pterin-4-alpha-carbinolamine dehydratase (104 aa).

Position 2 is an N-acetylalanine (alanine 2). Substrate-binding positions include aspartate 61–histidine 63 and serine 78–glutamate 81.

It belongs to the pterin-4-alpha-carbinolamine dehydratase family. As to quaternary structure, homotetramer and homodimer. Heterotetramer with HNF1A; formed by a dimer of dimers. Interacts with HNF1B (via HNF-p1 domain); the interaction increases HNF1B transactivation activity. As to expression, mainly expressed in the liver, in pancreatic cells, and in the kidney, especially in the distal convoluted tubule, in the cortical thick ascending limb of Henle's loop and in the connecting tubule.

Its subcellular location is the cytoplasm. It is found in the nucleus. The catalysed reaction is (4aS,6R)-4a-hydroxy-L-erythro-5,6,7,8-tetrahydrobiopterin = (6R)-L-erythro-6,7-dihydrobiopterin + H2O. In terms of biological role, involved in tetrahydrobiopterin biosynthesis. Seems to both prevent the formation of 7-pterins and accelerate the formation of quinonoid-BH2. Coactivator for HNF1A-dependent transcription. Regulates the dimerization of homeodomain protein HNF1A and enhances its transcriptional activity. Also acts as a coactivator for HNF1B-dependent transcription. In Mus musculus (Mouse), this protein is Pterin-4-alpha-carbinolamine dehydratase (Pcbd1).